Here is a 133-residue protein sequence, read N- to C-terminus: Ribosome-binding factor A (133 aa).

The protein belongs to the RbfA family. In terms of assembly, monomer. Binds 30S ribosomal subunits, but not 50S ribosomal subunits or 70S ribosomes.

It localises to the cytoplasm. Functionally, one of several proteins that assist in the late maturation steps of the functional core of the 30S ribosomal subunit. Associates with free 30S ribosomal subunits (but not with 30S subunits that are part of 70S ribosomes or polysomes). Required for efficient processing of 16S rRNA. May interact with the 5'-terminal helix region of 16S rRNA. This is Ribosome-binding factor A from Psychromonas ingrahamii (strain DSM 17664 / CCUG 51855 / 37).